The sequence spans 513 residues: ATP synthase subunit alpha (513 aa).

169 to 176 (GDRQTGKT) is a binding site for ATP.

It belongs to the ATPase alpha/beta chains family. F-type ATPases have 2 components, CF(1) - the catalytic core - and CF(0) - the membrane proton channel. CF(1) has five subunits: alpha(3), beta(3), gamma(1), delta(1), epsilon(1). CF(0) has three main subunits: a(1), b(2) and c(9-12). The alpha and beta chains form an alternating ring which encloses part of the gamma chain. CF(1) is attached to CF(0) by a central stalk formed by the gamma and epsilon chains, while a peripheral stalk is formed by the delta and b chains.

The protein resides in the cell inner membrane. It catalyses the reaction ATP + H2O + 4 H(+)(in) = ADP + phosphate + 5 H(+)(out). Functionally, produces ATP from ADP in the presence of a proton gradient across the membrane. The alpha chain is a regulatory subunit. This Haemophilus influenzae (strain ATCC 51907 / DSM 11121 / KW20 / Rd) protein is ATP synthase subunit alpha.